The following is a 584-amino-acid chain: MREKYRQERDKRSVGRTYQFARGDFSRYARDPYTERQEREPLTDEVDVAVVGAGIGGLLTGAHLRKETGLERIRLIDGAGDVGGTWYWNRFPGVRCDVESYIYMPLLEETGTIPREKYSTGPEIFAHLQQIAHRYDLYRDALFQTTVTELRWDEAAGRWLVSTDRGDLIRARYVAMSIGLMHRPKLPGLPGLETFAGHSFHTSRWDFDYTGGDSTGGLTKLKDKKVGVIGTGSTTIQLAPHLAEWAEQLILFQRTPAAVDVRGNRPTPPEWAAGLAPGWQQRRMENFHALTSGVPQDEDLVQDRWTQTTAKLAAAILPTGDTGGDPKERALAAERADFLKMEELRARIDSVVTDPATAAALKPYYRVYCKRPCFHDGYLQTFNRPNVTLVDTQGQGVERLTPAGVVANGREYPLDCLIFATGYEHEFAVPYTERAGYDIVGRDGLRLSEKWADGARTLHGLQVNGFPNCFILSKVQAGRHVNIAYMLGEQTRHLAHIVKCVEERGHQVVEASEAGEKEWVEEILRLATNDIDFLENCTPGLYNNEGDPSGLPLLNSSYGGGSVEFVNILRRWREAGDLAGLELR.

Residues Ile55–Gly56, Asp77–Gly78, Thr85–Trp86, Asp97–Val98, Tyr103, Val147, and Met486 each bind FAD.

This sequence belongs to the FAD-binding monooxygenase family. FAD serves as cofactor.

It catalyses the reaction 1-deoxy-11-oxopentalenate + NADPH + O2 + H(+) = pentalenolactone D + NADP(+) + H2O. The protein operates within antibiotic biosynthesis; pentalenolactone biosynthesis. Catalyzes the flavin-dependent Baeyer-Villiger oxidation of 1-deoxy-11-oxopentalenic acid to pentalenolactone D in the biosynthesis of pentalenolactone antibiotic. The chain is Pentalenolactone D synthase (penE) from Streptomyces exfoliatus (Streptomyces hydrogenans).